A 437-amino-acid polypeptide reads, in one-letter code: Indole diterpene prenyltransferase anaPT (437 aa).

Positions 1–28 (MSPLSMQTDSVQGTAENKSLETNGTSND) are disordered. Residues 102–103 (GF) and glutamate 111 contribute to the L-tryptophan site. Arginine 124, lysine 208, tyrosine 210, tyrosine 282, glutamine 355, tyrosine 357, tyrosine 422, and tyrosine 426 together coordinate dimethylallyl diphosphate.

Belongs to the tryptophan dimethylallyltransferase family.

It carries out the reaction (R)-benzodiazepinedione + dimethylallyl diphosphate = (2R,3S,11R)-aszonalenin + diphosphate. The catalysed reaction is (S)-benzodiazepinedione + dimethylallyl diphosphate = (2R,3S,11S)-aszonalenin + diphosphate. It functions in the pathway alkaloid biosynthesis. Functionally, indole diterpene prenyltransferase; part of the gene cluster that mediates the biosynthesis of the prenylated pyrroloindoline diketopiperazine acetylaszonalenin. The first step in the pathway is the formation of (R)-benzodiazepinedione by condensation of tryptophan and anthranilic acid catalyzed by the non-ribosomal peptide synthetase anaPS. The prenyltransferase anaPT then converts (R)-benzodiazepinedione to aszonalenin in the presence of dimethylallyl diphosphate (DMAPP) via C3-prenylation. The last step in the biosynthesis of acetylaszonalenin via acetylation of aszonalenin at position N1 catalyzed by anaAT. This is Indole diterpene prenyltransferase anaPT from Neosartorya fischeri (strain ATCC 1020 / DSM 3700 / CBS 544.65 / FGSC A1164 / JCM 1740 / NRRL 181 / WB 181) (Aspergillus fischerianus).